The sequence spans 65 residues: UPF0434 protein BRADO0313 (65 aa).

This sequence belongs to the UPF0434 family.

The protein is UPF0434 protein BRADO0313 of Bradyrhizobium sp. (strain ORS 278).